We begin with the raw amino-acid sequence, 67 residues long: Large ribosomal subunit protein bL35 (67 aa).

Residues 1 to 16 (MPKMKTKSSAKKRFRV) show a composition bias toward basic residues. The disordered stretch occupies residues 1 to 24 (MPKMKTKSSAKKRFRVRPGGTVKR).

This sequence belongs to the bacterial ribosomal protein bL35 family.

This Verminephrobacter eiseniae (strain EF01-2) protein is Large ribosomal subunit protein bL35.